Reading from the N-terminus, the 157-residue chain is Transcriptional repressor NrdR (157 aa).

The segment at 3–34 is a zinc-finger region; that stretch reads CPSCQNTDSRVLESRSADAGKCVRRRRECLNC. The ATP-cone domain maps to 49–139; sequence VTVIKRSNAK…VYRQFNGIED (91 aa).

The protein belongs to the NrdR family. The cofactor is Zn(2+).

Negatively regulates transcription of bacterial ribonucleotide reductase nrd genes and operons by binding to NrdR-boxes. In Prochlorococcus marinus (strain SARG / CCMP1375 / SS120), this protein is Transcriptional repressor NrdR.